We begin with the raw amino-acid sequence, 210 residues long: Fibroblast growth factor 8 (210 aa).

Positions 1 to 27 (MRLIPSRLSYLFLHLFAFCYYAQVTIQ) are cleaved as a signal peptide.

This sequence belongs to the heparin-binding growth factors family. Monomer. Homodimer.

The protein localises to the secreted. In terms of biological role, plays an important role in the regulation of embryonic development, cell proliferation, cell differentiation and cell migration. Required for Kupffer's vesicle ciliogenesis. This Danio rerio (Zebrafish) protein is Fibroblast growth factor 8.